A 204-amino-acid polypeptide reads, in one-letter code: Rho GDP-dissociation inhibitor 1 (204 aa).

The disordered stretch occupies residues methionine 1–glutamine 36. N-acetylalanine is present on alanine 2. Serine 34 bears the Phosphoserine mark. Lysine 43 bears the N6-acetyllysine mark. The residue at position 47 (serine 47) is a Phosphoserine. 2 positions are modified to N6-acetyllysine: lysine 105 and lysine 127. Glycyl lysine isopeptide (Lys-Gly) (interchain with G-Cter in SUMO1); alternate cross-links involve residues lysine 138 and lysine 141. Residues lysine 138 and lysine 141 each participate in a glycyl lysine isopeptide (Lys-Gly) (interchain with G-Cter in SUMO2); alternate cross-link. N6-acetyllysine; alternate is present on lysine 141. The residue at position 141 (lysine 141) is an N6-succinyllysine; alternate. Lysine 178 is modified (N6-acetyllysine).

It belongs to the Rho GDI family. In terms of assembly, monomer. Interacts with FER. Interacts with PLXNB3. Forms a heterodimer with RAC1. Interacts with RHOA, the affinity is increased by three orders of magnitude when RHOA is prenylated. Interacts with PSMD10; the interaction increases ARHGDIA association with RHOA, leading to ARHGDIA-mediated inactivation of RHOA and ROCK and prolonged AKT activation. Interacts with KANK2; the interaction is direct and may regulate the interaction of ARHGDIA with RHOA, RAC1 and CDC42. Interacts with RHOC. Interacts with CDC42. Interacts with NGFR (via death domain); NGFR binding decreases the affinity for RHOA.

It localises to the cytoplasm. Its function is as follows. Controls Rho proteins homeostasis. Regulates the GDP/GTP exchange reaction of the Rho proteins by inhibiting the dissociation of GDP from them, and the subsequent binding of GTP to them. Retains Rho proteins such as CDC42, RAC1 and RHOA in an inactive cytosolic pool, regulating their stability and protecting them from degradation. Actively involved in the recycling and distribution of activated Rho GTPases in the cell, mediates extraction from membranes of both inactive and activated molecules due its exceptionally high affinity for prenylated forms. Through the modulation of Rho proteins, may play a role in cell motility regulation. In glioma cells, inhibits cell migration and invasion by mediating the signals of SEMA5A and PLXNB3 that lead to inactivation of RAC1. The chain is Rho GDP-dissociation inhibitor 1 (ARHGDIA) from Homo sapiens (Human).